Here is a 209-residue protein sequence, read N- to C-terminus: ATP-dependent Clp protease proteolytic subunit (209 aa).

Catalysis depends on Ser-111, which acts as the Nucleophile. The active site involves His-136.

This sequence belongs to the peptidase S14 family. As to quaternary structure, fourteen ClpP subunits assemble into 2 heptameric rings which stack back to back to give a disk-like structure with a central cavity, resembling the structure of eukaryotic proteasomes.

The protein localises to the cytoplasm. The catalysed reaction is Hydrolysis of proteins to small peptides in the presence of ATP and magnesium. alpha-casein is the usual test substrate. In the absence of ATP, only oligopeptides shorter than five residues are hydrolyzed (such as succinyl-Leu-Tyr-|-NHMec, and Leu-Tyr-Leu-|-Tyr-Trp, in which cleavage of the -Tyr-|-Leu- and -Tyr-|-Trp bonds also occurs).. In terms of biological role, cleaves peptides in various proteins in a process that requires ATP hydrolysis. Has a chymotrypsin-like activity. Plays a major role in the degradation of misfolded proteins. The polypeptide is ATP-dependent Clp protease proteolytic subunit (Dechloromonas aromatica (strain RCB)).